Reading from the N-terminus, the 197-residue chain is Probable GTP-binding protein EngB (197 aa).

In terms of domain architecture, EngB-type G spans Ser25–Arg197. Residues Gly33–Ser40, Gly60–Gln64, Asp79–Gly82, Thr146–Asp149, and Met177–Ile179 contribute to the GTP site. The Mg(2+) site is built by Ser40 and Thr62.

This sequence belongs to the TRAFAC class TrmE-Era-EngA-EngB-Septin-like GTPase superfamily. EngB GTPase family. It depends on Mg(2+) as a cofactor.

Necessary for normal cell division and for the maintenance of normal septation. This is Probable GTP-binding protein EngB from Wolbachia pipientis wMel.